The following is an 88-amino-acid chain: DNA-directed RNA polymerase subunit omega (88 aa).

The protein belongs to the RNA polymerase subunit omega family. In terms of assembly, the RNAP catalytic core consists of 2 alpha, 1 beta, 1 beta' and 1 omega subunit. When a sigma factor is associated with the core the holoenzyme is formed, which can initiate transcription.

The catalysed reaction is RNA(n) + a ribonucleoside 5'-triphosphate = RNA(n+1) + diphosphate. In terms of biological role, promotes RNA polymerase assembly. Latches the N- and C-terminal regions of the beta' subunit thereby facilitating its interaction with the beta and alpha subunits. The protein is DNA-directed RNA polymerase subunit omega of Salinispora tropica (strain ATCC BAA-916 / DSM 44818 / JCM 13857 / NBRC 105044 / CNB-440).